A 153-amino-acid polypeptide reads, in one-letter code: SsrA-binding protein (153 aa).

Belongs to the SmpB family.

The protein resides in the cytoplasm. Functionally, required for rescue of stalled ribosomes mediated by trans-translation. Binds to transfer-messenger RNA (tmRNA), required for stable association of tmRNA with ribosomes. tmRNA and SmpB together mimic tRNA shape, replacing the anticodon stem-loop with SmpB. tmRNA is encoded by the ssrA gene; the 2 termini fold to resemble tRNA(Ala) and it encodes a 'tag peptide', a short internal open reading frame. During trans-translation Ala-aminoacylated tmRNA acts like a tRNA, entering the A-site of stalled ribosomes, displacing the stalled mRNA. The ribosome then switches to translate the ORF on the tmRNA; the nascent peptide is terminated with the 'tag peptide' encoded by the tmRNA and targeted for degradation. The ribosome is freed to recommence translation, which seems to be the essential function of trans-translation. The chain is SsrA-binding protein from Desulforudis audaxviator (strain MP104C).